Consider the following 1413-residue polypeptide: ABC-type transporter vrcC (1413 aa).

Positions 108-365 (VWFEALALAR…FLDMGFACPE (258 aa)) constitute an ABC transporter 1 domain. A glycan (N-linked (GlcNAc...) asparagine) is linked at Asn-289. A helical membrane pass occupies residues 476–496 (VTISSLIGNVITALVIASIFY). An N-linked (GlcNAc...) asparagine glycan is attached at Asn-501. 2 helical membrane passes run 510–530 (ALLF…MLTL) and 564–584 (VLNA…VLLG). Asn-675 is a glycosylation site (N-linked (GlcNAc...) asparagine). Residues 683–703 (IGIILAFMVVLGAIYLVATDF) form a helical membrane-spanning segment. Positions 725–748 (SGKPDDFEGGSDRNASQEKSKSDR) are disordered. Residue Asn-738 is glycosylated (N-linked (GlcNAc...) asparagine). Residues 739–748 (ASQEKSKSDR) show a composition bias toward basic and acidic residues. The ABC transporter 2 domain occupies 761 to 1003 (FQWQDVCFDI…ILIDYFVRNG (243 aa)). The next 6 helical transmembrane spans lie at 1105 to 1125 (IYIY…GFSL), 1142 to 1162 (IFLL…HFVT), 1191 to 1211 (LFWN…PIGM), 1230 to 1250 (LLIW…IAAL), 1266 to 1286 (LCLL…FWIF), and 1290 to 1310 (VSPF…DTTV). Residue Asn-1324 is glycosylated (N-linked (GlcNAc...) asparagine). The helical transmembrane segment at 1378–1398 (FGLMWVFIFTNIVAACLLYWW) threads the bilayer.

Belongs to the ABC transporter superfamily. ABCG family. PDR (TC 3.A.1.205) subfamily.

The protein localises to the cell membrane. Its function is as follows. ABC-type transporter; part of the gene cluster that mediates the biosynthesis of the sesterterpene variecolin. VrcC is probably involved in the secretion of variecolin. The polypeptide is ABC-type transporter vrcC (Aspergillus aculeatus (strain ATCC 16872 / CBS 172.66 / WB 5094)).